The sequence spans 550 residues: Eukaryotic translation initiation factor 3 subunit L (550 aa).

Residues 1–20 (MVRDSFDGGHTGDPERDLAY) form a disordered region. In terms of domain architecture, PCI spans 309–503 (EATKIFVNCL…IDDSTTDLDF (195 aa)).

This sequence belongs to the eIF-3 subunit L family. As to quaternary structure, component of the eukaryotic translation initiation factor 3 (eIF-3) complex.

The protein resides in the cytoplasm. In terms of biological role, component of the eukaryotic translation initiation factor 3 (eIF-3) complex, which is involved in protein synthesis of a specialized repertoire of mRNAs and, together with other initiation factors, stimulates binding of mRNA and methionyl-tRNAi to the 40S ribosome. The eIF-3 complex specifically targets and initiates translation of a subset of mRNAs involved in cell proliferation. This Brugia malayi (Filarial nematode worm) protein is Eukaryotic translation initiation factor 3 subunit L.